The chain runs to 541 residues: Formimidoyltransferase-cyclodeaminase (541 aa).

Residues 1 to 181 (MAKLVECVPN…GATVTGARTF (181 aa)) are formiminotransferase N-subdomain. The active-site For formimidoyltransferase activity is His82. Folate is bound at residue 163–172 (GPPAFVPQWG). The tract at residues 182–326 (LIAYNINLLC…PRERIIEYLV (145 aa)) is formiminotransferase C-subdomain. The tract at residues 327 to 334 (QAGQEDKG) is linker. The interval 335-541 (LVTKPLGAFV…VLALLEKREA (207 aa)) is cyclodeaminase/cyclohydrolase. Asp412 (for cyclodeaminase activity) is an active-site residue.

This sequence in the C-terminal section; belongs to the cyclodeaminase/cyclohydrolase family. It in the N-terminal section; belongs to the formiminotransferase family. As to quaternary structure, homooctamer, including four polyglutamate binding sites. The subunits are arranged as a tetramer of dimers, and form a planar ring-shaped structure.

The protein resides in the cytoplasm. It localises to the cytosol. It is found in the golgi apparatus. Its subcellular location is the cytoskeleton. The protein localises to the microtubule organizing center. The protein resides in the centrosome. It localises to the centriole. The catalysed reaction is 5-formimidoyltetrahydrofolate + L-glutamate = N-formimidoyl-L-glutamate + (6S)-5,6,7,8-tetrahydrofolate. It catalyses the reaction 5-formimidoyltetrahydrofolate + 2 H(+) = (6R)-5,10-methenyltetrahydrofolate + NH4(+). It participates in amino-acid degradation; L-histidine degradation into L-glutamate; L-glutamate from N-formimidoyl-L-glutamate (transferase route): step 1/1. Its function is as follows. Folate-dependent enzyme, that displays both transferase and deaminase activity. Serves to channel one-carbon units from formiminoglutamate to the folate pool. In terms of biological role, binds and promotes bundling of vimentin filaments originating from the Golgi. The protein is Formimidoyltransferase-cyclodeaminase (FTCD) of Gallus gallus (Chicken).